A 319-amino-acid polypeptide reads, in one-letter code: Nucleotide-binding protein Rru_A3448 (319 aa).

A disordered region spans residues Met-1–Asp-34. Gly-42–Thr-49 is an ATP binding site. Position 90-93 (Asp-90–Thr-93) interacts with GTP.

This sequence belongs to the RapZ-like family.

In terms of biological role, displays ATPase and GTPase activities. The chain is Nucleotide-binding protein Rru_A3448 from Rhodospirillum rubrum (strain ATCC 11170 / ATH 1.1.1 / DSM 467 / LMG 4362 / NCIMB 8255 / S1).